The sequence spans 401 residues: 1-deoxy-D-xylulose 5-phosphate reductoisomerase (401 aa).

NADPH-binding residues include Thr-10, Gly-11, Ser-12, Ile-13, Asn-38, and Asn-124. A 1-deoxy-D-xylulose 5-phosphate-binding site is contributed by Lys-125. Glu-126 provides a ligand contact to NADPH. Asp-150 provides a ligand contact to Mn(2+). Positions 151, 152, 186, and 209 each coordinate 1-deoxy-D-xylulose 5-phosphate. Glu-152 contributes to the Mn(2+) binding site. Gly-215 lines the NADPH pocket. Positions 222, 227, 228, and 231 each coordinate 1-deoxy-D-xylulose 5-phosphate. Glu-231 contacts Mn(2+).

It belongs to the DXR family. Mg(2+) serves as cofactor. Requires Mn(2+) as cofactor.

The catalysed reaction is 2-C-methyl-D-erythritol 4-phosphate + NADP(+) = 1-deoxy-D-xylulose 5-phosphate + NADPH + H(+). Its pathway is isoprenoid biosynthesis; isopentenyl diphosphate biosynthesis via DXP pathway; isopentenyl diphosphate from 1-deoxy-D-xylulose 5-phosphate: step 1/6. Catalyzes the NADPH-dependent rearrangement and reduction of 1-deoxy-D-xylulose-5-phosphate (DXP) to 2-C-methyl-D-erythritol 4-phosphate (MEP). The protein is 1-deoxy-D-xylulose 5-phosphate reductoisomerase of Vibrio campbellii (strain ATCC BAA-1116).